The following is a 154-amino-acid chain: Protein MoxZ (154 aa).

This is Protein MoxZ (moxZ) from Paracoccus denitrificans.